The chain runs to 264 residues: ATP synthase subunit a (264 aa).

5 helical membrane-spanning segments follow: residues 39-59 (LDTL…FYIV), 97-117 (VAPL…MDLV), 139-159 (TADP…VIFY), 205-225 (LFGN…LPWW), and 239-259 (LLVI…YISL).

This sequence belongs to the ATPase A chain family. In terms of assembly, F-type ATPases have 2 components, CF(1) - the catalytic core - and CF(0) - the membrane proton channel. CF(1) has five subunits: alpha(3), beta(3), gamma(1), delta(1), epsilon(1). CF(0) has three main subunits: a(1), b(2) and c(9-12). The alpha and beta chains form an alternating ring which encloses part of the gamma chain. CF(1) is attached to CF(0) by a central stalk formed by the gamma and epsilon chains, while a peripheral stalk is formed by the delta and b chains.

Its subcellular location is the cell inner membrane. Functionally, key component of the proton channel; it plays a direct role in the translocation of protons across the membrane. The chain is ATP synthase subunit a from Coxiella burnetii (strain RSA 331 / Henzerling II).